Consider the following 215-residue polypeptide: Orotate phosphoribosyltransferase (215 aa).

K26 is a 5-phospho-alpha-D-ribose 1-diphosphate binding site. 34 to 35 (FF) contributes to the orotate binding site. 5-phospho-alpha-D-ribose 1-diphosphate contacts are provided by residues 72–73 (YK), R99, K100, K103, H105, and 124–132 (DDVITAGTA). Orotate is bound by residues T128 and R156.

It belongs to the purine/pyrimidine phosphoribosyltransferase family. PyrE subfamily. In terms of assembly, homodimer. Requires Mg(2+) as cofactor.

The catalysed reaction is orotidine 5'-phosphate + diphosphate = orotate + 5-phospho-alpha-D-ribose 1-diphosphate. It participates in pyrimidine metabolism; UMP biosynthesis via de novo pathway; UMP from orotate: step 1/2. Functionally, catalyzes the transfer of a ribosyl phosphate group from 5-phosphoribose 1-diphosphate to orotate, leading to the formation of orotidine monophosphate (OMP). In Stutzerimonas stutzeri (strain A1501) (Pseudomonas stutzeri), this protein is Orotate phosphoribosyltransferase.